Reading from the N-terminus, the 348-residue chain is D-fructose 1,6-bisphosphatase class 2/sedoheptulose 1,7-bisphosphatase 2 (348 aa).

Asp33, Glu57, Asp97, and Glu100 together coordinate Mn(2+). Residues 100–102 (EGT), Tyr131, 176–178 (RER), and 198–200 (DGD) each bind substrate. A Mn(2+)-binding site is contributed by Glu225.

It belongs to the FBPase class 2 family. Homotetramer.

The enzyme catalyses beta-D-fructose 1,6-bisphosphate + H2O = beta-D-fructose 6-phosphate + phosphate. The catalysed reaction is D-sedoheptulose 1,7-bisphosphate + H2O = D-sedoheptulose 7-phosphate + phosphate. Its pathway is carbohydrate biosynthesis; Calvin cycle. Catalyzes the hydrolysis of fructose 1,6-bisphosphate (Fru 1,6-P2) and sedoheptulose 1,7-bisphosphate (Sed 1,7-P2) to fructose 6-phosphate and sedoheptulose 7-phosphate, respectively. The protein is D-fructose 1,6-bisphosphatase class 2/sedoheptulose 1,7-bisphosphatase 2 of Acaryochloris marina (strain MBIC 11017).